The chain runs to 180 residues: Fetal and adult testis-expressed transcript protein homolog (180 aa).

The interval 77 to 108 is disordered; the sequence is GPQLRGVGVVGEQGDGGAQPQENPGGSQGMRS. Positions 84 to 93 are enriched in gly residues; that stretch reads GVVGEQGDGG. A compositionally biased stretch (polar residues) spans 96–107; that stretch reads PQENPGGSQGMR. Residues 160-178 form a helical membrane-spanning segment; the sequence is VLLFTMLLSSCITNLWLWM.

In terms of assembly, interacts with BIK and RNF183. Interacts with IMMT/MIC60and EMD.

It localises to the mitochondrion. The protein resides in the mitochondrion outer membrane. The protein localises to the endoplasmic reticulum membrane. Involved in the regulation of endoplasmic reticulum (ER)-mitochondria coupling. Negatively regulates the ER-mitochondria distance and Ca(2+) transfer from ER to mitochondria possibly implicating it in the regulation of apoptosis. May collaborate with RNF183 to restrain BIK protein levels thus regulating apoptotic signaling. This Bos taurus (Bovine) protein is Fetal and adult testis-expressed transcript protein homolog (FATE1).